The sequence spans 98 residues: NADH-ubiquinone oxidoreductase chain 4L (98 aa).

A run of 3 helical transmembrane segments spans residues 1-21, 25-45, and 59-81; these read MSLV…GLLM, HLMS…VMAT, and MPII…LVMV.

The protein belongs to the complex I subunit 4L family. As to quaternary structure, core subunit of respiratory chain NADH dehydrogenase (Complex I) which is composed of 45 different subunits.

The protein resides in the mitochondrion inner membrane. The enzyme catalyses a ubiquinone + NADH + 5 H(+)(in) = a ubiquinol + NAD(+) + 4 H(+)(out). Core subunit of the mitochondrial membrane respiratory chain NADH dehydrogenase (Complex I) which catalyzes electron transfer from NADH through the respiratory chain, using ubiquinone as an electron acceptor. Part of the enzyme membrane arm which is embedded in the lipid bilayer and involved in proton translocation. The sequence is that of NADH-ubiquinone oxidoreductase chain 4L (MT-ND4L) from Equus caballus (Horse).